Reading from the N-terminus, the 313-residue chain is Porphobilinogen deaminase (313 aa).

Cys242 carries the S-(dipyrrolylmethanemethyl)cysteine modification.

This sequence belongs to the HMBS family. As to quaternary structure, monomer. Requires dipyrromethane as cofactor.

It carries out the reaction 4 porphobilinogen + H2O = hydroxymethylbilane + 4 NH4(+). It functions in the pathway porphyrin-containing compound metabolism; protoporphyrin-IX biosynthesis; coproporphyrinogen-III from 5-aminolevulinate: step 2/4. Functionally, tetrapolymerization of the monopyrrole PBG into the hydroxymethylbilane pre-uroporphyrinogen in several discrete steps. This Pectobacterium carotovorum subsp. carotovorum (strain PC1) protein is Porphobilinogen deaminase.